The primary structure comprises 656 residues: Phosphatidylinositol 4,5-bisphosphate-binding protein SLM2 (656 aa).

Residues F445 to S555 enclose the PH domain. The disordered stretch occupies residues A577–S605. Residues N580 to E594 are compositionally biased toward polar residues. S626 is modified (phosphoserine). A PXIXIT-like, required for interaction with CNA1 and CNA2, and calcineurin-dependent dephosphorylation motif is present at residues P640–E645. 2 positions are modified to phosphoserine: S649 and S653.

Heterodimer of SLM1-SLM2. Binds phosphatidylinositol 4,5-bisphosphate, which is required for function. Interacts with the TORC2 subunits AVO2, BIT61 and TOR2. Interacts with the calcineurin catalytic subunits CNA1 and CNA2.

It is found in the cell membrane. Its function is as follows. Together with SLM1, effector of the TORC2- and calcineurin-signaling pathways. Phosphorylated and activated by TORC2 under favorable growth conditions. Mediates actin polarization via inhibition of calcineurin-dependent transcription. Upon nutrient limitation or environmental stress, gets dephosphorylated by calcineurin, inhibiting interaction with TORC2, thereby antagonizing TORC2 signaling and mediating calcineurin-dependent actin depolarization. Also functions in heat-induced, calcineurin-mediated uracil permease (FUR4) endocytosis. The chain is Phosphatidylinositol 4,5-bisphosphate-binding protein SLM2 (SLM2) from Saccharomyces cerevisiae (strain ATCC 204508 / S288c) (Baker's yeast).